The chain runs to 144 residues: Large ribosomal subunit protein uL13 (144 aa).

The protein belongs to the universal ribosomal protein uL13 family. Part of the 50S ribosomal subunit.

This protein is one of the early assembly proteins of the 50S ribosomal subunit, although it is not seen to bind rRNA by itself. It is important during the early stages of 50S assembly. In Buchnera aphidicola subsp. Baizongia pistaciae (strain Bp), this protein is Large ribosomal subunit protein uL13.